Reading from the N-terminus, the 257-residue chain is MLGHAAKLLARARFAIAFTGAGISAESGIPTFRGRNGLWKTYRAEELATPEAFKRDPHLVWEFYKWRMRKILKAEPNPAHKALAELENMGVLKAVITQNVDDLHREAGSRKVVELHGNIFRVRCVSCSYRENLKESGRVFEFVREKELPKCPKCGSLLRPDVVWFGEPLPREALEEAFSLAERADVVLVVGTSGVVYPAAYVPYIVKERGGKVIEVNVERSGITPIADVFIRGKAGEVMPELLRRVKDIMAERNHYG.

Residues 1 to 252 form the Deacetylase sirtuin-type domain; the sequence is MLGHAAKLLA…LRRVKDIMAE (252 aa). 20–39 is an NAD(+) binding site; it reads GAGISAESGIPTFRGRNGLW. Substrate-binding residues include tyrosine 64 and arginine 67. Residue 98–101 coordinates NAD(+); that stretch reads QNVD. Catalysis depends on histidine 116, which acts as the Proton acceptor. The Zn(2+) site is built by cysteine 124, cysteine 127, cysteine 151, and cysteine 154. NAD(+) contacts are provided by residues 191–193, 217–219, and alanine 235; these read GTS and NVE.

Belongs to the sirtuin family. Class III subfamily. Requires Zn(2+) as cofactor.

Its subcellular location is the cytoplasm. It catalyses the reaction N(6)-acetyl-L-lysyl-[protein] + NAD(+) + H2O = 2''-O-acetyl-ADP-D-ribose + nicotinamide + L-lysyl-[protein]. The catalysed reaction is N(6)-succinyl-L-lysyl-[protein] + NAD(+) + H2O = 2''-O-succinyl-ADP-D-ribose + nicotinamide + L-lysyl-[protein]. NAD-dependent lysine deacetylase and desuccinylase that specifically removes acetyl and succinyl groups on target proteins. Modulates the activities of several proteins which are inactive in their acylated form. Deacetylates the N-terminal lysine residue of Alba, the major archaeal chromatin protein and that, in turn, increases Alba's DNA binding affinity, thereby repressing transcription. The polypeptide is NAD-dependent protein deacylase (Thermococcus kodakarensis (strain ATCC BAA-918 / JCM 12380 / KOD1) (Pyrococcus kodakaraensis (strain KOD1))).